Here is a 359-residue protein sequence, read N- to C-terminus: Probable NAD(P)H nitroreductase PigM (359 aa).

The protein belongs to the nitroreductase family. The cofactor is FMN.

The protein operates within antibiotic biosynthesis; prodigiosin biosynthesis. Functionally, involved in the biosynthesis of 4-methoxy-2,2'-bipyrrole-5-carbaldehyde (MBC), one of the terminal products involved in the biosynthesis of the red antibiotic prodigiosin (Pig). Catalyzes the oxidation of the hydroxy group of 4-hydroxy-2,2'-bipyrrole-5-methanol (HBM) to yield 4-methoxy-2,2'-bipyrrole-5-carbaldehyde (MBC). This is Probable NAD(P)H nitroreductase PigM from Serratia sp. (strain ATCC 39006) (Prodigiosinella confusarubida).